A 479-amino-acid chain; its full sequence is Sulfate adenylyltransferase subunit 1 (479 aa).

Residues 25-239 (KSLLRFLTCG…EVLETVDIQR (215 aa)) form the tr-type G domain. The segment at 34-41 (GSVDDGKS) is G1. Position 34-41 (34-41 (GSVDDGKS)) interacts with GTP. Residues 92–96 (GITID) are G2. The G3 stretch occupies residues 113-116 (DTPG). Residues 113–117 (DTPGH) and 168–171 (NKMD) each bind GTP. Residues 168 to 171 (NKMD) form a G4 region. The tract at residues 206–208 (SAL) is G5.

This sequence belongs to the TRAFAC class translation factor GTPase superfamily. Classic translation factor GTPase family. CysN/NodQ subfamily. As to quaternary structure, heterodimer composed of CysD, the smaller subunit, and CysN.

It catalyses the reaction sulfate + ATP + H(+) = adenosine 5'-phosphosulfate + diphosphate. The protein operates within sulfur metabolism; hydrogen sulfide biosynthesis; sulfite from sulfate: step 1/3. Its function is as follows. With CysD forms the ATP sulfurylase (ATPS) that catalyzes the adenylation of sulfate producing adenosine 5'-phosphosulfate (APS) and diphosphate, the first enzymatic step in sulfur assimilation pathway. APS synthesis involves the formation of a high-energy phosphoric-sulfuric acid anhydride bond driven by GTP hydrolysis by CysN coupled to ATP hydrolysis by CysD. In Salmonella typhi, this protein is Sulfate adenylyltransferase subunit 1.